A 1755-amino-acid chain; its full sequence is Transposon Ty1-ML1 Gag-Pol polyprotein (1755 aa).

Composition is skewed to polar residues over residues 1 to 23, 48 to 60, and 127 to 152; these read MESQ…SVTS, TKAN…TPAS, and QSQF…GNTF. Disordered regions lie at residues 1–88, 126–173, and 352–421; these read MESQ…YPQQ, PQSQ…RPPP, and GSRN…SKST. The segment covering 153-165 has biased composition (low complexity); the sequence is TDSSSADSDMTST. Positions 299 to 401 are RNA-binding; the sequence is NNGIHINNKV…NSKSKTARAH (103 aa). The span at 402–418 shows a compositional bias: low complexity; sequence NVSTSNNSPSTDNDSIS. The active-site For protease activity; shared with dimeric partner is D461. Positions 583-640 are integrase-type zinc finger-like; sequence NVHTSESTRKYPYPFIHRMLAHANAQTIRYSLKNNTITYFNESDVDWSSAIDYQCPDC. In terms of domain architecture, Integrase catalytic spans 660 to 835; the sequence is NSYEPFQYLH…AGLDISTLLP (176 aa). Mg(2+)-binding residues include D671 and D736. Disordered stretches follow at residues 956–1087, 1092–1111, and 1130–1171; these read SKAV…ETEK, RSPS…NIVP, and DLPL…DSNA. The segment covering 960–969 has biased composition (low complexity); that stretch reads SPTDSTPPST. The segment covering 1005–1015 has biased composition (polar residues); the sequence is STPQISNIEST. The segment covering 1038–1053 has biased composition (basic and acidic residues); the sequence is ESSHASKSKDFRHSDS. Composition is skewed to polar residues over residues 1054–1082 and 1101–1111; these read YSEN…QISD and PENNSSHNIVP. Residues 1178–1212 carry the Bipartite nuclear localization signal motif; that stretch reads KKRSLEDNETEIKVSRDTWNTKNMRSLEPPRSKKR. Residues 1338-1476 enclose the Reverse transcriptase Ty1/copia-type domain; it reads NNYYITQLDI…DILGLEIKYQ (139 aa). The Mg(2+) site is built by D1346, D1427, D1428, D1610, E1652, and D1685. The region spanning 1610-1752 is the RNase H Ty1/copia-type domain; sequence DASYGNQPYY…IKTFKLLTNK (143 aa).

As to quaternary structure, the capsid protein forms a homotrimer, from which the VLPs are assembled. The protease is a homodimer, whose active site consists of two apposed aspartic acid residues. Initially, virus-like particles (VLPs) are composed of the structural unprocessed proteins Gag and Gag-Pol, and also contain the host initiator methionine tRNA (tRNA(i)-Met) which serves as a primer for minus-strand DNA synthesis, and a dimer of genomic Ty RNA. Processing of the polyproteins occurs within the particle and proceeds by an ordered pathway, called maturation. First, the protease (PR) is released by autocatalytic cleavage of the Gag-Pol polyprotein yielding capsid protein p45 and a Pol-p154 precursor protein. This cleavage is a prerequisite for subsequent processing of Pol-p154 at the remaining sites to release the mature structural and catalytic proteins. Maturation takes place prior to the RT reaction and is required to produce transposition-competent VLPs.

The protein localises to the cytoplasm. It localises to the nucleus. It catalyses the reaction DNA(n) + a 2'-deoxyribonucleoside 5'-triphosphate = DNA(n+1) + diphosphate. The catalysed reaction is Endonucleolytic cleavage to 5'-phosphomonoester.. Its function is as follows. Capsid protein (CA) is the structural component of the virus-like particle (VLP), forming the shell that encapsulates the retrotransposons dimeric RNA genome. The particles are assembled from trimer-clustered units and there are holes in the capsid shells that allow for the diffusion of macromolecules. CA also has nucleocapsid-like chaperone activity, promoting primer tRNA(i)-Met annealing to the multipartite primer-binding site (PBS), dimerization of Ty1 RNA and initiation of reverse transcription. In terms of biological role, the aspartyl protease (PR) mediates the proteolytic cleavages of the Gag and Gag-Pol polyproteins after assembly of the VLP. Reverse transcriptase/ribonuclease H (RT) is a multifunctional enzyme that catalyzes the conversion of the retro-elements RNA genome into dsDNA within the VLP. The enzyme displays a DNA polymerase activity that can copy either DNA or RNA templates, and a ribonuclease H (RNase H) activity that cleaves the RNA strand of RNA-DNA heteroduplexes during plus-strand synthesis and hydrolyzes RNA primers. The conversion leads to a linear dsDNA copy of the retrotransposon that includes long terminal repeats (LTRs) at both ends. Functionally, integrase (IN) targets the VLP to the nucleus, where a subparticle preintegration complex (PIC) containing at least integrase and the newly synthesized dsDNA copy of the retrotransposon must transit the nuclear membrane. Once in the nucleus, integrase performs the integration of the dsDNA into the host genome. The sequence is that of Transposon Ty1-ML1 Gag-Pol polyprotein (TY1B-ML1) from Saccharomyces cerevisiae (strain ATCC 204508 / S288c) (Baker's yeast).